The sequence spans 156 residues: MENEKNYRPNVAAIVLSSSYPFECKIFIAKRSDMDNIWQFPQGGIDKGESVKNALFRELKEEIGTDEVEIIAEYPEWLSYDFPSKIVKKMYPYDGQIQKYFLVRLKHGATININTKHPEFDDYQFVSVKQIFEMINHFKKNIYVKVIKYFEEKGYI.

Positions asparagine 6–lysine 148 constitute a Nudix hydrolase domain. The short motif at glycine 43–glycine 64 is the Nudix box element.

This sequence belongs to the Nudix hydrolase family. RppH subfamily. The cofactor is a divalent metal cation.

Functionally, accelerates the degradation of transcripts by removing pyrophosphate from the 5'-end of triphosphorylated RNA, leading to a more labile monophosphorylated state that can stimulate subsequent ribonuclease cleavage. The protein is RNA pyrophosphohydrolase of Campylobacter jejuni subsp. jejuni serotype O:6 (strain 81116 / NCTC 11828).